Reading from the N-terminus, the 455-residue chain is Rhodopsin (455 aa).

Topologically, residues 1–34 (MVESTTLVNQTWWYNPTVDIHPHWAKFDPIPDAV) are extracellular. Asn-9 carries an N-linked (GlcNAc...) asparagine glycan. The helical transmembrane segment at 35-59 (YYSVGIFIGVVGIIGILGNGVVIYL) threads the bilayer. The Cytoplasmic portion of the chain corresponds to 60–71 (FSKTKSLQTPAN). The helical transmembrane segment at 72–98 (MFIINLAMSDLSFSAINGFPLKTISAF) threads the bilayer. Over 99–110 (MKKWIFGKVACQ) the chain is Extracellular. Residues Cys-109 and Cys-187 are joined by a disulfide bond. The chain crosses the membrane as a helical span at residues 111–132 (LYGLLGGIFGFMSINTMAMISI). Positions 133 to 135 (DRY) match the 'Ionic lock' involved in activated form stabilization motif. The Cytoplasmic segment spans residues 133-152 (DRYNVIGRPMAASKKMSHRR). A helical membrane pass occupies residues 153–173 (AFLMIIFVWMWSIVWSVGPVF). Residues 174–200 (NWGAYVPEGILTSCSFDYLSTDPSTRS) are Extracellular-facing. Residues 201-225 (FILCMYFCGFMLPIIIIAFCYFNIV) form a helical membrane-spanning segment. The Cytoplasmic portion of the chain corresponds to 226–262 (MSVSNHEKEMAAMAKRLNAKELRKAQAGASAEMKLAK). Residues 263-284 (ISMVIITQFMLSWSPYAIIALL) traverse the membrane as a helical segment. Topologically, residues 285–294 (AQFGPAEWVT) are extracellular. The helical transmembrane segment at 295–316 (PYAAELPVLFAKASAIHNPIVY) threads the bilayer. An N6-(retinylidene)lysine modification is found at Lys-306. The Cytoplasmic segment spans residues 317–455 (SVSHPKFREA…QGVDNQAYQA (139 aa)). S-palmitoyl cysteine attachment occurs at residues Cys-337 and Cys-338. The segment covering 378-387 (QKMQAQQAAY) has biased composition (low complexity). The disordered stretch occupies residues 378 to 455 (QKMQAQQAAY…QGVDNQAYQA (78 aa)). Residues 388-433 (QPPPPPQGYPPQGYPPQGAYPPPQGYPPQGYPPQGYPPQGYPPQGA) are compositionally biased toward pro residues. Tandem repeats lie at residues 395-399 (GYPPQ), 400-404 (GYPPQ), 412-416 (GYPPQ), 417-421 (GYPPQ), 422-426 (GYPPQ), and 427-431 (GYPPQ). The segment at 395 to 431 (GYPPQGYPPQGAYPPPQGYPPQGYPPQGYPPQGYPPQ) is 6 X 5 AA repeats of G-Y-P-P-Q.

It belongs to the G-protein coupled receptor 1 family. Opsin subfamily. Post-translationally, contains one covalently linked retinal chromophore. Upon light absorption, the covalently bound 11-cis-retinal is converted to all-trans-retinal. After hydrolysis of the Schiff base and release of the covalently bound all-trans-retinal, active rhodopsin is regenerated by binding of a fresh molecule of 11-cis-retinal.

It is found in the cell projection. The protein resides in the rhabdomere membrane. Its function is as follows. Photoreceptor required for image-forming vision at low light intensity. Light-induced isomerization of 11-cis to all-trans retinal triggers a conformational change that activates signaling via G-proteins. Signaling mediates the activation of phospholipase C. Subsequent receptor phosphorylation mediates displacement of the bound G-protein alpha subunit by arrestin and terminates signaling. The sequence is that of Rhodopsin (RHO) from Enteroctopus dofleini (North Pacific giant octopus).